Here is a 314-residue protein sequence, read N- to C-terminus: Regulator of microtubule dynamics protein 1 (314 aa).

The residue at position 165 (Lys165) is an N6-succinyllysine. TPR repeat units lie at residues 168-204 and 222-258; these read AICLSDVGDYEGIKAKIANAYIIKEHFEKAIELNPKD and PWYQRRIAKMLFATPPSSTYEKALSYFHRAEQVDPNF.

This sequence belongs to the RMDN family. Interacts with microtubules.

The protein resides in the cytoplasm. It localises to the cytoskeleton. The protein localises to the spindle. It is found in the spindle pole. This chain is Regulator of microtubule dynamics protein 1 (RMDN1), found in Pongo abelii (Sumatran orangutan).